Consider the following 417-residue polypeptide: MSSISGFLGAIPGAQQILQTMAGSLGLAPLSHPEIASSGSTFQQCGKLELSCQTSYHGQDTCCFNYPGGQMLQTQFWDADPAVGPENSWTIHGLWPDHCNGGFDQFCDSHRKYSNISLILIDAGRRDLLDEMSTYWKDYRGDDPNLWEHEWNKHGTCVSTLETHCYSEYYPQQEVVDYFDKTVELFHDLPTYMTLANAGIVPSYTQTYTRHEVEDALSKAHGATVTVRCRSQRLQEVWYFFNVEGPLQTGKFVPSEPDGQTSNCPAKGIIYQPKTPNKDPGHGHEPTKTRHPHGPTGAPFIGKGNLVVSTMGQQRGCIIGRGTWYSSGTCADFRAKRASGDTFTLSSRKGPCAFKDDIFTCGSYISSPAEFSAEDGKLSYHGNTTFFADKAPKGKVQSDIFVSEADHPIELSIAWRG.

An N-terminal signal peptide occupies residues 1–22 (MSSISGFLGAIPGAQQILQTMA). 5 disulfides stabilise this stretch: cysteine 45–cysteine 63, cysteine 52–cysteine 99, cysteine 62–cysteine 165, cysteine 107–cysteine 157, and cysteine 229–cysteine 264. Residue histidine 92 is part of the active site. The N-linked (GlcNAc...) asparagine glycan is linked to asparagine 115. Active-site residues include glutamate 150 and histidine 154. A disordered region spans residues 274–296 (KTPNKDPGHGHEPTKTRHPHGPT). Positions 276–288 (PNKDPGHGHEPTK) are enriched in basic and acidic residues. Asparagine 383 carries N-linked (GlcNAc...) asparagine glycosylation.

Belongs to the RNase T2 family.

Its subcellular location is the vacuole lumen. The protein resides in the cytoplasm. It catalyses the reaction a ribonucleotidyl-ribonucleotide-RNA + H2O = a 3'-end 3'-phospho-ribonucleotide-RNA + a 5'-end dephospho-ribonucleoside-RNA + H(+). Rnase which modulates cell survival under stress conditions. Released from the vacuole to the cytoplasm during stress to promote tRNA and rRNA cleavage and to activate separately a downstream pathway that promotes cell death. Involved in cell size, vacuolar morphology and growth at high temperatures and high salt concentration. The chain is Ribonuclease T2-like (rny1) from Emericella nidulans (strain FGSC A4 / ATCC 38163 / CBS 112.46 / NRRL 194 / M139) (Aspergillus nidulans).